A 437-amino-acid polypeptide reads, in one-letter code: Protein farnesyltransferase subunit beta (437 aa).

5 PFTB repeats span residues 123–164 (ATDV…CIIG), 174–215 (REKL…SLTN), 222–263 (FEGT…VILK), 270–312 (LKSL…PLLH), and 332–374 (QQAL…SIAQ). (2E,6E)-farnesyl diphosphate-binding positions include 248–251 (HGGY) and 291–294 (RCNK). Zn(2+) is bound by residues D297 and C299. 300 to 303 (YSFW) provides a ligand contact to (2E,6E)-farnesyl diphosphate. Zn(2+) is bound at residue H362. Phosphothreonine is present on T436.

This sequence belongs to the protein prenyltransferase subunit beta family. As to quaternary structure, heterodimer of FNTA and FNTB. Zn(2+) serves as cofactor.

It carries out the reaction L-cysteinyl-[protein] + (2E,6E)-farnesyl diphosphate = S-(2E,6E)-farnesyl-L-cysteinyl-[protein] + diphosphate. Essential subunit of the farnesyltransferase complex. Catalyzes the transfer of a farnesyl moiety from farnesyl diphosphate to a cysteine at the fourth position from the C-terminus of several proteins having the C-terminal sequence Cys-aliphatic-aliphatic-X. The polypeptide is Protein farnesyltransferase subunit beta (FNTB) (Bos taurus (Bovine)).